The primary structure comprises 197 residues: Chalcone--flavanone isomerase 2 (197 aa).

Substrate contacts are provided by Thr-23, Asn-88, and Thr-165.

The protein belongs to the chalcone isomerase family.

It carries out the reaction a chalcone = a flavanone.. The protein operates within secondary metabolite biosynthesis; flavonoid biosynthesis. Catalyzes the intramolecular cyclization of bicyclic chalcones into tricyclic (S)-flavanones. Responsible for the isomerization of 4,2',4',6'-tetrahydroxychalcone (also termed chalcone) into naringenin. The polypeptide is Chalcone--flavanone isomerase 2 (CHI2) (Medicago sativa (Alfalfa)).